The primary structure comprises 453 residues: Ribosomal protein uS12 methylthiotransferase RimO (453 aa).

An MTTase N-terminal domain is found at 6–116; it reads PKVGFVSLGC…VMEAVHEALP (111 aa). Positions 15, 51, 80, 147, 151, and 154 each coordinate [4Fe-4S] cluster. The 238-residue stretch at 133–370 folds into the Radical SAM core domain; that stretch reads LTPRHYAYLK…MEKQAQISAA (238 aa). The 69-residue stretch at 373-441 folds into the TRAM domain; that stretch reads EAKIGTVQQC…EHDLYGDALP (69 aa).

This sequence belongs to the methylthiotransferase family. RimO subfamily. Requires [4Fe-4S] cluster as cofactor.

The protein localises to the cytoplasm. The catalysed reaction is L-aspartate(89)-[ribosomal protein uS12]-hydrogen + (sulfur carrier)-SH + AH2 + 2 S-adenosyl-L-methionine = 3-methylsulfanyl-L-aspartate(89)-[ribosomal protein uS12]-hydrogen + (sulfur carrier)-H + 5'-deoxyadenosine + L-methionine + A + S-adenosyl-L-homocysteine + 2 H(+). Catalyzes the methylthiolation of an aspartic acid residue of ribosomal protein uS12. In Stenotrophomonas maltophilia (strain K279a), this protein is Ribosomal protein uS12 methylthiotransferase RimO.